We begin with the raw amino-acid sequence, 124 residues long: uncharacterized protein (124 aa).

Residues A2 to V22 form a helical membrane-spanning segment. The interval N24–K124 is disordered. Basic and acidic residues-rich tracts occupy residues E30–E58, D67–Y81, and K89–R113.

The protein localises to the membrane. This is an uncharacterized protein from Bacillus subtilis (strain 168).